The primary structure comprises 391 residues: Acetylgalactosaminyl-O-glycosyl-glycoprotein beta-1,3-N-acetylglucosaminyltransferase (391 aa).

Residues 1–11 (MALPSSRRFKS) lie on the Cytoplasmic side of the membrane. The chain crosses the membrane as a helical; Signal-anchor for type II membrane protein span at residues 12–32 (PTTLAFFLVGVTLVVLNQWFL). Over 33–391 (QEHRQEKAKG…TAGEQNPDAH (359 aa)) the chain is Lumenal. N-linked (GlcNAc...) asparagine glycans are attached at residues Asn-68 and Asn-191.

The protein belongs to the glycosyltransferase 31 family.

The protein resides in the golgi apparatus membrane. It carries out the reaction a 3-O-[N-acetyl-alpha-D-galactosaminyl]-L-threonyl-[protein] + UDP-N-acetyl-alpha-D-glucosamine = a 3-O-[N-acetyl-beta-D-glucosaminyl-(1-&gt;3)-N-acetyl-alpha-D-galactosaminyl]-L-threonyl-[protein] + UDP + H(+). It catalyses the reaction a 3-O-[N-acetyl-alpha-D-galactosaminyl]-L-seryl-[protein] + UDP-N-acetyl-alpha-D-glucosamine = 3-O-[N-acetyl-beta-D-glucosaminyl-(1-&gt;3)-N-acetyl-alpha-D-galactosaminyl]-L-seryl-[protein] + UDP + H(+). It functions in the pathway protein modification; protein glycosylation. Beta-1,3-N-acetylglucosaminyltransferase that synthesizes the core 3 structure of the O-glycan, an important precursor in the biosynthesis of mucin-type glycoproteins. Plays an important role in the synthesis of mucin-type O-glycans in digestive organs. The polypeptide is Acetylgalactosaminyl-O-glycosyl-glycoprotein beta-1,3-N-acetylglucosaminyltransferase (B3gnt6) (Mus musculus (Mouse)).